The following is a 382-amino-acid chain: Mannitol-1-phosphate 5-dehydrogenase (382 aa).

Residue 3 to 14 coordinates NAD(+); sequence ALHFGAGNIGRG.

It belongs to the mannitol dehydrogenase family.

It catalyses the reaction D-mannitol 1-phosphate + NAD(+) = beta-D-fructose 6-phosphate + NADH + H(+). The sequence is that of Mannitol-1-phosphate 5-dehydrogenase from Erwinia tasmaniensis (strain DSM 17950 / CFBP 7177 / CIP 109463 / NCPPB 4357 / Et1/99).